Consider the following 339-residue polypeptide: Glycerol-3-phosphate dehydrogenase [NAD(P)+] (339 aa).

Ser-15, Tyr-16, His-36, and Lys-110 together coordinate NADPH. The sn-glycerol 3-phosphate site is built by Lys-110, Gly-139, and Thr-141. Ala-143 lines the NADPH pocket. Residues Lys-195, Asp-248, Ser-258, Arg-259, and Asn-260 each contribute to the sn-glycerol 3-phosphate site. Residue Lys-195 is the Proton acceptor of the active site. Arg-259 lines the NADPH pocket. 2 residues coordinate NADPH: Val-283 and Glu-285.

It belongs to the NAD-dependent glycerol-3-phosphate dehydrogenase family.

It is found in the cytoplasm. It catalyses the reaction sn-glycerol 3-phosphate + NAD(+) = dihydroxyacetone phosphate + NADH + H(+). It carries out the reaction sn-glycerol 3-phosphate + NADP(+) = dihydroxyacetone phosphate + NADPH + H(+). Its pathway is membrane lipid metabolism; glycerophospholipid metabolism. Catalyzes the reduction of the glycolytic intermediate dihydroxyacetone phosphate (DHAP) to sn-glycerol 3-phosphate (G3P), the key precursor for phospholipid synthesis. This chain is Glycerol-3-phosphate dehydrogenase [NAD(P)+], found in Escherichia coli O17:K52:H18 (strain UMN026 / ExPEC).